A 253-amino-acid polypeptide reads, in one-letter code: 3-deoxy-manno-octulosonate cytidylyltransferase (253 aa).

It belongs to the KdsB family.

It is found in the cytoplasm. It catalyses the reaction 3-deoxy-alpha-D-manno-oct-2-ulosonate + CTP = CMP-3-deoxy-beta-D-manno-octulosonate + diphosphate. The protein operates within nucleotide-sugar biosynthesis; CMP-3-deoxy-D-manno-octulosonate biosynthesis; CMP-3-deoxy-D-manno-octulosonate from 3-deoxy-D-manno-octulosonate and CTP: step 1/1. Its pathway is bacterial outer membrane biogenesis; lipopolysaccharide biosynthesis. Its function is as follows. Activates KDO (a required 8-carbon sugar) for incorporation into bacterial lipopolysaccharide in Gram-negative bacteria. The sequence is that of 3-deoxy-manno-octulosonate cytidylyltransferase from Haemophilus ducreyi (strain 35000HP / ATCC 700724).